We begin with the raw amino-acid sequence, 340 residues long: Anthranilate phosphoribosyltransferase (340 aa).

5-phospho-alpha-D-ribose 1-diphosphate contacts are provided by residues Gly82, 85–86, Thr90, 92–95, 110–118, and Ser122; these read GD, NIST, and KHGSRSVSS. Gly82 serves as a coordination point for anthranilate. Ser94 lines the Mg(2+) pocket. Arg168 is an anthranilate binding site. Residues Asp227 and Glu228 each coordinate Mg(2+).

It belongs to the anthranilate phosphoribosyltransferase family. Homodimer. Mg(2+) serves as cofactor.

The catalysed reaction is N-(5-phospho-beta-D-ribosyl)anthranilate + diphosphate = 5-phospho-alpha-D-ribose 1-diphosphate + anthranilate. Its pathway is amino-acid biosynthesis; L-tryptophan biosynthesis; L-tryptophan from chorismate: step 2/5. In terms of biological role, catalyzes the transfer of the phosphoribosyl group of 5-phosphorylribose-1-pyrophosphate (PRPP) to anthranilate to yield N-(5'-phosphoribosyl)-anthranilate (PRA). This is Anthranilate phosphoribosyltransferase from Hydrogenovibrio crunogenus (strain DSM 25203 / XCL-2) (Thiomicrospira crunogena).